We begin with the raw amino-acid sequence, 258 residues long: 5'-nucleotidase SurE (258 aa).

A divalent metal cation contacts are provided by aspartate 9, aspartate 10, serine 42, and asparagine 95.

Belongs to the SurE nucleotidase family. Requires a divalent metal cation as cofactor.

It localises to the cytoplasm. It carries out the reaction a ribonucleoside 5'-phosphate + H2O = a ribonucleoside + phosphate. Its function is as follows. Nucleotidase that shows phosphatase activity on nucleoside 5'-monophosphates. This Campylobacter concisus (strain 13826) protein is 5'-nucleotidase SurE.